The following is a 311-amino-acid chain: Transcriptional repressor scratch 2 (311 aa).

Residues 1 to 20 (MPRSFLVKKIKADGFQCSGV) form an SNAG domain region. Disordered stretches follow at residues 71–90 (PAYPAAASEEYSDPESPQSS) and 120–156 (RRRAGAGGDAAGAGDAGGGGGGGGGGERAGRSGATAG). The span at 124-146 (GAGGDAAGAGDAGGGGGGGGGGE) shows a compositional bias: gly residues. C2H2-type zinc fingers lie at residues 161–183 (HACAECGKTYATSSNLSRHKQTH), 192–214 (RKCPTCGKAYVSMPALAMHVLTH), 218–240 (HKCGVCGKAFSRPWLLQGHMRSH), and 246–268 (FGCAHCGKAFADRSNLRAHMQTH). Residues 274-297 (YRCRQCDKSFALKSYLHKHCEAAC) form a C2H2-type 5; atypical zinc finger.

This sequence belongs to the snail C2H2-type zinc-finger protein family.

It localises to the nucleus. May be involved in transcriptional regulation. The polypeptide is Transcriptional repressor scratch 2 (Scrt2) (Mus musculus (Mouse)).